The primary structure comprises 221 residues: Retinitis pigmentosa 9 protein (221 aa).

Composition is skewed to basic and acidic residues over residues 1 to 10, 17 to 29, and 60 to 69; these read MSSRPGREDV, RPRE…LQRR, and IKEDETKPED. The segment at 1-76 is disordered; it reads MSSRPGREDV…PEDCIPDVPG (76 aa). The tract at residues 1-155 is PIM1-binding; the sequence is MSSRPGREDV…RDNKRHEKDV (155 aa). Residues 104-122 form a CCHC-type zinc finger; sequence QCWRCKRYGHRTGDKECPF. Lys-129 is covalently cross-linked (Glycyl lysine isopeptide (Lys-Gly) (interchain with G-Cter in SUMO2)). Residues 147–156 show a composition bias toward basic and acidic residues; that stretch reads DNKRHEKDVR. The disordered stretch occupies residues 147-221; it reads DNKRHEKDVR…SKSNEGSDSE (75 aa). The span at 184-212 shows a compositional bias: basic residues; sequence KHKKKKKKEKHKKRKKEKKKKKKRKHKSS. 2 positions are modified to phosphoserine; by PIM1: Ser-212 and Ser-214.

In terms of assembly, binds to PIM1. Binds to ZNHIT4. Appears to be expressed in a wide range of tissues.

The protein localises to the nucleus. In terms of biological role, is thought to be a target protein for the PIM1 kinase. May play some roles in B-cell proliferation in association with PIM1. This chain is Retinitis pigmentosa 9 protein (RP9), found in Homo sapiens (Human).